Consider the following 1606-residue polypeptide: Phosphatidylinositol 3,4,5-trisphosphate-dependent Rac exchanger 2 protein (1606 aa).

In terms of domain architecture, DH spans 23–214; it reads LRVCVLSELQ…KAVCSNINEA (192 aa). A PH domain is found at 245–361; it reads EMLMCGVLLK…WFEAILKERE (117 aa). 2 DEP domains span residues 390-464 and 491-566; these read CRQG…RFRY and SLFT…FFSD. PDZ domains lie at 592–671 and 677–754; these read KSLL…VLVS and TVKI…QDSI. The tract at residues 1581–1606 is disordered; it reads GVRDRTPQSAPRLYKLCEPPPPAGEE.

As to quaternary structure, interacts with RAC1. In terms of tissue distribution, isoform 1 is highly expressed in skeletal muscle, heart and placenta, absent from peripheral blood leukocytes. Isoform 2 is expressed in skeletal muscle, kidney, small intestine, and placenta. Isoform 3 is expressed in the heart.

Functions as a RAC1 guanine nucleotide exchange factor (GEF), activating Rac proteins by exchanging bound GDP for free GTP. Its activity is synergistically activated by phosphatidylinositol 3,4,5-trisphosphate and the beta gamma subunits of heterotrimeric G protein. Mediates the activation of RAC1 in a PI3K-dependent manner. May be an important mediator of Rac signaling, acting directly downstream of both G protein-coupled receptors and phosphoinositide 3-kinase. The chain is Phosphatidylinositol 3,4,5-trisphosphate-dependent Rac exchanger 2 protein from Homo sapiens (Human).